Here is a 521-residue protein sequence, read N- to C-terminus: uncharacterized protein (521 aa).

A run of 10 helical transmembrane segments spans residues 103–123 (NLMLQVLAPCFVLLWCAVPMP), 136–156 (FWFFLIFYYGIYNAVGLLWIT), 177–197 (YILFWMFSLLVGSLVVYFTAW), 200–220 (ITFTWITLMFISMIIPIGISF), 259–279 (AYAHYSWFIVVLLVTLLVYIV), 299–319 (IMYVYSWTGTVSLCNLVSSWI), 327–346 (YALVTVFKLYFELTLQVYVR), 358–378 (FVLVQIASSLTMMSVIPLITM), 411–431 (CVASNVSMLSFLGWSLILHFG), and 450–470 (FKLTFYASTAVWISEMVASYL).

The protein resides in the membrane. This is an uncharacterized protein from Schizosaccharomyces pombe (strain 972 / ATCC 24843) (Fission yeast).